Here is a 393-residue protein sequence, read N- to C-terminus: Major outer membrane porin, serovar L1 (393 aa).

The signal sequence occupies residues 1-22; it reads MKKLLKSVLVFAALSSASSLQA.

The protein belongs to the chlamydial porin (CP) (TC 1.B.2) family. Part of a disulfide cross-linked outer membrane complex (COMC) composed of the major outer membrane porin (MOMP), the small cysteine-rich protein (OmcA) and the large cysteine-rich periplasmic protein (OmcB).

Its subcellular location is the cell outer membrane. In terms of biological role, in elementary bodies (EBs, the infectious stage, which is able to survive outside the host cell) provides the structural integrity of the outer envelope through disulfide cross-links with the small cysteine-rich protein and the large cysteine-rich periplasmic protein. It has been described in publications as the Sarkosyl-insoluble COMC (Chlamydia outer membrane complex), and serves as the functional equivalent of peptidoglycan. Functionally, permits diffusion of specific solutes through the outer membrane. This chain is Major outer membrane porin, serovar L1 (ompA), found in Chlamydia trachomatis.